Consider the following 284-residue polypeptide: Cytochrome P450 2C31 (284 aa).

Residue C229 coordinates heme.

This sequence belongs to the cytochrome P450 family. Heme is required as a cofactor.

The protein resides in the endoplasmic reticulum membrane. It is found in the microsome membrane. The catalysed reaction is an organic molecule + reduced [NADPH--hemoprotein reductase] + O2 = an alcohol + oxidized [NADPH--hemoprotein reductase] + H2O + H(+). In terms of biological role, cytochromes P450 are a group of heme-thiolate monooxygenases. In liver microsomes, this enzyme is involved in an NADPH-dependent electron transport pathway. It oxidizes a variety of structurally unrelated compounds, including steroids, fatty acids, and xenobiotics. The protein is Cytochrome P450 2C31 (CYP2C31) of Capra hircus aegagrus (Wild goat).